A 511-amino-acid polypeptide reads, in one-letter code: DEP domain-containing protein 7 (511 aa).

In terms of domain architecture, DEP spans leucine 46–threonine 136.

The protein belongs to the DEPDC7 family.

In Pongo abelii (Sumatran orangutan), this protein is DEP domain-containing protein 7 (DEPDC7).